The primary structure comprises 324 residues: 7,8-didemethyl-8-hydroxy-5-deazariboflavin synthase (324 aa).

The region spanning 4 to 239 (VTYSKNVFIP…QEVAIQIPPN (236 aa)) is the Radical SAM core domain. Cys-18, Cys-22, and Cys-25 together coordinate [4Fe-4S] cluster.

The protein belongs to the radical SAM superfamily. CofG family. Consists of two subunits, CofG and CofH. [4Fe-4S] cluster is required as a cofactor.

The enzyme catalyses 5-amino-5-(4-hydroxybenzyl)-6-(D-ribitylimino)-5,6-dihydrouracil + S-adenosyl-L-methionine = 7,8-didemethyl-8-hydroxy-5-deazariboflavin + 5'-deoxyadenosine + L-methionine + NH4(+) + H(+). It functions in the pathway cofactor biosynthesis; coenzyme F0 biosynthesis. Functionally, catalyzes the radical-mediated synthesis of 7,8-didemethyl-8-hydroxy-5-deazariboflavin from 5-amino-5-(4-hydroxybenzyl)-6-(D-ribitylimino)-5,6-dihydrouracil. The protein is 7,8-didemethyl-8-hydroxy-5-deazariboflavin synthase of Archaeoglobus fulgidus (strain ATCC 49558 / DSM 4304 / JCM 9628 / NBRC 100126 / VC-16).